We begin with the raw amino-acid sequence, 450 residues long: Trehalose/maltose-binding protein MalE (450 aa).

The first 24 residues, 1–24, serve as a signal peptide directing secretion; sequence MNVKKVLLGLFLVGVLGIAVVASG. Positions 57, 84, 89, 110, 161, 163, 217, 279, 297, 299, 334, 335, 371, and 404 each coordinate alpha,alpha-trehalose.

Belongs to the bacterial solute-binding protein 1 family. In terms of assembly, the complex is composed of two ATP-binding proteins (MalK), two transmembrane proteins (MalG and MalF) and a solute-binding protein (MalE). In terms of processing, glycosylated.

The protein localises to the cell membrane. Its function is as follows. Part of the ABC transporter complex MalEFGK involved in trehalose/maltose import. Binds maltose and trehalose. In Thermococcus litoralis (strain ATCC 51850 / DSM 5473 / JCM 8560 / NS-C), this protein is Trehalose/maltose-binding protein MalE (malE).